The primary structure comprises 455 residues: Argininosuccinate lyase (455 aa).

It belongs to the lyase 1 family. Argininosuccinate lyase subfamily.

Its subcellular location is the cytoplasm. The enzyme catalyses 2-(N(omega)-L-arginino)succinate = fumarate + L-arginine. The protein operates within amino-acid biosynthesis; L-arginine biosynthesis; L-arginine from L-ornithine and carbamoyl phosphate: step 3/3. The polypeptide is Argininosuccinate lyase (Shewanella halifaxensis (strain HAW-EB4)).